A 364-amino-acid chain; its full sequence is Nucleoporin SEH1 (364 aa).

WD repeat units follow at residues 10–49 (DHKD…EWHC), 55–96 (THSG…SNDK), 111–152 (DSRT…NLSQ), 160–210 (SCKL…RKYA), 217–258 (TVTD…RESA), and 276–315 (SHNS…NWKC).

This sequence belongs to the WD repeat SEC13 family. In terms of assembly, component of the Nup107-160 subcomplex of the nuclear pore complex (NPC). The Nup107-160 subcomplex includes NUP160, NUP133, NUP107, NUP98, NUP85, NUP43, NUP37, SEH1 and SEC13. Component of the GATOR2 subcomplex, composed of MIOS, SEC13, SEH1L, WDR24 and WDR59. The GATOR2 complex interacts with CASTOR1 and CASTOR2; the interaction is negatively regulated by arginine. The GATOR2 complex interacts with SESN1, SESN2 and SESN3; the interaction is negatively regulated by amino acids.

The protein resides in the chromosome. It is found in the centromere. The protein localises to the kinetochore. Its subcellular location is the nucleus. It localises to the nuclear pore complex. The protein resides in the lysosome membrane. With respect to regulation, the GATOR2 complex is negatively regulated by the upstream amino acid sensors CASTOR1 and SESN2, which sequester the GATOR2 complex in absence of amino acids. In the presence of abundant amino acids, GATOR2 is released from CASTOR1 and SESN2 and activated. In terms of biological role, component of the Nup107-160 subcomplex of the nuclear pore complex (NPC). The Nup107-160 subcomplex is required for the assembly of a functional NPC. The Nup107-160 subcomplex is also required for normal kinetochore microtubule attachment, mitotic progression and chromosome segregation. This subunit plays a role in recruitment of the Nup107-160 subcomplex to the kinetochore. Functionally, as a component of the GATOR2 complex, functions as an activator of the amino acid-sensing branch of the mTORC1 signaling pathway. The GATOR2 complex indirectly activates mTORC1 through the inhibition of the GATOR1 subcomplex. GATOR2 probably acts as an E3 ubiquitin-protein ligase toward GATOR1. In the presence of abundant amino acids, the GATOR2 complex mediates ubiquitination of the NPRL2 core component of the GATOR1 complex, leading to GATOR1 inactivation. In the absence of amino acids, GATOR2 is inhibited, activating the GATOR1 complex. The sequence is that of Nucleoporin SEH1 (seh1l) from Danio rerio (Zebrafish).